Consider the following 245-residue polypeptide: Gas vesicle protein F (245 aa).

Belongs to the gas vesicle GvpF/GvpL family. As to quaternary structure, binds GvpA.

The protein resides in the gas vesicle. A minor component of the gas vesicle, may be involved in preventing GvpA aggregation during gas vesicle nucleation. Gas vesicles (GV) are hollow, gas filled proteinaceous nanostructures. During planktonic growth they allow positioning of the organism at a favorable depth for light or nutrient acquisition. This chain is Gas vesicle protein F, found in Dolichospermum flosaquae (Anabaena flos-aquae).